Consider the following 1141-residue polypeptide: Serine-aspartate repeat-containing protein E (1141 aa).

The signal sequence occupies residues 1–52 (MINRDNKKAITKKGMISNRLNKFSIRKYTVGTASILVGTTLIFGLGNQEAKA). The YSIRK-G/S signaling motif signature appears at 23–34 (FSIRKYTVGTAS). Residues 53 to 601 (AENTSTENAK…GDGTVKPEEK (549 aa)) form a ligand binding A region region. The segment at 54-248 (ENTSTENAKQ…RSTKPVATAP (195 aa)) is disordered. Over residues 61-75 (AKQDDATTSDNKEVV) the composition is skewed to basic and acidic residues. A compositionally biased stretch (low complexity) spans 77–90 (ETENNSTTENDSTN). Residues 92-108 (IKKETNTDSQPEAKEES) show a composition bias toward basic and acidic residues. Positions 109–126 (TTSSTQQQQNNVTATTET) are enriched in low complexity. Residues 130-145 (NIEKENVKPSTDKTAT) show a composition bias toward basic and acidic residues. The segment covering 159-207 (NYTNNDVTTKPSTSEIQTKPTTPQESTNIENSQPQPTPSKVDNQVTDAT) has biased composition (polar residues). Residues 216–241 (SKEELKNNPEKLKELVRNDNNTDRST) show a composition bias toward basic and acidic residues. CNA-B domains are found at residues 602–714 (LYKI…YKEP), 715–824 (KYNL…YKTP), and 825–935 (KYSL…EEDT). Positions 929-1117 (GYFEEDTSDS…GSENNGSNNA (189 aa)) are disordered. Residues 930 to 1080 (YFEEDTSDSD…DSDSDSDSDS (151 aa)) are compositionally biased toward acidic residues. Residues 1104-1108 (LPETG) carry the LPXTG sorting signal motif. A Pentaglycyl murein peptidoglycan amidated threonine modification is found at Thr1107. A propeptide spans 1108-1141 (GSENNGSNNATLFGGLFAALGSLLLFGRRKKQNK) (removed by sortase).

This sequence belongs to the serine-aspartate repeat-containing protein (SDr) family. In terms of assembly, interacts with host complement factor H/CFAH (via C-terminus). Interacts with host complement regulator C4BPA.

It is found in the secreted. The protein localises to the cell wall. Cell surface-associated calcium-binding protein which plays an important role in adhesion and pathogenesis. Contributes to the resistance to killing by innate immune components in blood and thus attenuates bacterial clearance by interacting with host complement factor H/CFAH and modulating its activity. Inhibits also bacterial opsonization and killing by interacting with host complement regulator C4BPA and thus inhibiting classical complement pathway activation. This is Serine-aspartate repeat-containing protein E (sdrE) from Staphylococcus aureus (strain Mu50 / ATCC 700699).